The chain runs to 144 residues: Histone H2B.2, sperm (144 aa).

Residues 1 to 51 are disordered; that stretch reads MPRSPAKTSPRKGSPRKGSPSRKASPKRGGKGAKRAGKGGRRRRVVKRRRR. 5 short sequence motifs (SPKK motif) span residues 4–7, 9–12, 14–17, 19–22, and 25–28; these read SPAK, SPRK, SPSR, and SPKR. Ser-14, Ser-19, and Ser-25 each carry phosphoserine. Residues 24–51 are compositionally biased toward basic residues; sequence ASPKRGGKGAKRAGKGGRRRRVVKRRRR. Residue Ser-131 is glycosylated (O-linked (GlcNAc) serine). A Glycyl lysine isopeptide (Lys-Gly) (interchain with G-Cter in ubiquitin) cross-link involves residue Lys-139.

This sequence belongs to the histone H2B family. In terms of assembly, the nucleosome is a histone octamer containing two molecules each of H2A, H2B, H3 and H4 assembled in one H3-H4 heterotetramer and two H2A-H2B heterodimers. The octamer wraps approximately 147 bp of DNA. Monoubiquitination of Lys-139 gives a specific tag for epigenetic transcriptional activation and is also prerequisite for histone H3 'Lys-4' and 'Lys-79' methylation. Post-translationally, phosphorylated on SPKK motifs 3, 4 and 5; which may regulate DNA binding. Dephosphorylated during maturation of spermatids to mature sperm and rephosphorylated at fertilization.

The protein resides in the nucleus. It localises to the chromosome. In terms of biological role, core component of nucleosome. Nucleosomes wrap and compact DNA into chromatin, limiting DNA accessibility to the cellular machineries which require DNA as a template. Histones thereby play a central role in transcription regulation, DNA repair, DNA replication and chromosomal stability. DNA accessibility is regulated via a complex set of post-translational modifications of histones, also called histone code, and nucleosome remodeling. The sequence is that of Histone H2B.2, sperm from Parechinus angulosus (Angulate sea urchin).